Reading from the N-terminus, the 353-residue chain is Tsukushi (353 aa).

The N-terminal stretch at 1 to 17 (MLCTLFLLLLALGIVQT) is a signal peptide. Residues 18–59 (TRPCFPGCQCEEETFGLFDSFSLIRVDCSSLGPHIVPVPIPL) form the LRRNT domain. 10 LRR repeats span residues 60–80 (DTAH…SVLG), 86–107 (TLAG…AFSR), 110–131 (YLES…VFTS), 133–154 (PLSD…AFTT), 160–180 (ALHV…PARA), 186–207 (TIQS…RDLP), 208–228 (LRYL…AFMG), 231–253 (GLTH…GFRE), 256–277 (GLQV…EVFS), and 281–302 (LLQE…LLHH). N-linked (GlcNAc...) asparagine glycosylation is present at Asn-75. Asn-138 is a glycosylation site (N-linked (GlcNAc...) asparagine). Asn-191 carries N-linked (GlcNAc...) asparagine glycosylation.

In terms of assembly, interacts with FZD4 (via FZ domain); competes with WNT2B for binding to FZD4, inhibiting Wnt signaling and repressing peripheral eye development. Interacts with TGFB1; the interaction contributes to regulation of the hair cycle. Interacts with netrin. Interacts with CCN2. In terms of tissue distribution, expressed at high levels in the liver, small intestine and placenta. Not or barely detectable in other tissues, including whole pancreas, adipose tissues, skeletal muscle, kidney, spleen, brain, lung and testis.

The protein resides in the secreted. Contributes to various developmental events and other processes such as wound healing and cholesterol homeostasis through its interactions with multiple signaling pathways. Wnt signaling inhibitor which competes with WNT2B for binding to Wnt receptor FZD4 and represses WNT2B-dependent development of the peripheral eye. Plays a role in regulating the hair cycle by controlling TGFB1 signaling. Required for the development of the anterior commissure in the brain by inhibiting neurite outgrowth. Essential for terminal differentiation of hippocampal neural stem cells. Plays a role in regulating bone elongation and bone mass by modulating growth plate chondrocyte function and overall body size. Required for development of the inner ear through its involvement in stereocilia formation in inner hair cells. Facilitates wound healing by inhibiting secretion of TGFB1 from macrophages which prevents myofibroblast differentiation, maintaining inflammatory cell quiescence. Plays a role in cholesterol homeostasis by reducing circulating high-density lipoprotein cholesterol, lowering cholesterol efflux capacity and decreasing cholesterol-to-bile acid conversion in the liver. In one study, shown to negatively regulate sympathetic innervation in brown fat, leading to reduced energy expenditure. In another study, shown not to affect brown fat thermogenic capacity, body weight gain or glucose homeostasis. The polypeptide is Tsukushi (Tsku) (Rattus norvegicus (Rat)).